A 521-amino-acid polypeptide reads, in one-letter code: Cytochrome P450 1A1 (521 aa).

Phenylalanine 229 provides a ligand contact to substrate. Position 463 (cysteine 463) interacts with heme.

The protein belongs to the cytochrome P450 family. Heme is required as a cofactor.

Its subcellular location is the endoplasmic reticulum membrane. The protein localises to the microsome membrane. The enzyme catalyses an organic molecule + reduced [NADPH--hemoprotein reductase] + O2 = an alcohol + oxidized [NADPH--hemoprotein reductase] + H2O + H(+). Its function is as follows. Cytochromes P450 are a group of heme-thiolate monooxygenases. They oxidize a variety of structurally unrelated compounds, including steroids, fatty acids, and xenobiotics. This Limanda limanda (Common dab) protein is Cytochrome P450 1A1 (cyp1a1).